The sequence spans 122 residues: Big defensin (122 aa).

An N-terminal signal peptide occupies residues 1–28; that stretch reads MTRPSLVRCYSLFFTALIVMAIICPAWS. Positions 29-34 are excised as a propeptide; the sequence is EEIPKS. Intrachain disulfides connect cysteine 88–cysteine 119, cysteine 95–cysteine 114, and cysteine 99–cysteine 120.

Belongs to the big defensin family. Expressed in hemocytes.

The protein resides in the secreted. In terms of biological role, significantly inhibits the growth of Gram-negative and Gram-positive bacteria and fungi in vitro. The polypeptide is Big defensin (Argopecten irradians (Bay scallop)).